The chain runs to 294 residues: Probable 2-(5''-triphosphoribosyl)-3'-dephosphocoenzyme-A synthase (294 aa).

It belongs to the CitG/MdcB family.

It catalyses the reaction 3'-dephospho-CoA + ATP = 2'-(5''-triphospho-alpha-D-ribosyl)-3'-dephospho-CoA + adenine. This chain is Probable 2-(5''-triphosphoribosyl)-3'-dephosphocoenzyme-A synthase, found in Streptococcus pyogenes serotype M3 (strain ATCC BAA-595 / MGAS315).